A 197-amino-acid polypeptide reads, in one-letter code: Recombination protein RecR (197 aa).

The segment at 56 to 71 (CHVCGNYCESDTCNIC) adopts a C4-type zinc-finger fold. Residues 79–174 (RIICVVEESK…KITKLASGIP (96 aa)) form the Toprim domain.

This sequence belongs to the RecR family.

May play a role in DNA repair. It seems to be involved in an RecBC-independent recombinational process of DNA repair. It may act with RecF and RecO. The sequence is that of Recombination protein RecR from Fusobacterium nucleatum subsp. nucleatum (strain ATCC 25586 / DSM 15643 / BCRC 10681 / CIP 101130 / JCM 8532 / KCTC 2640 / LMG 13131 / VPI 4355).